The following is a 104-amino-acid chain: MPSEGTWVYVVNLRRVYWGRRTRRAIRAVRMVREFVRRHTKADEVVIDNELNNYIWSRSREKPPARVKIIVSIREEEPEEGGERIRKAVVRLAGRKLRPGRYKG.

The protein belongs to the eukaryotic ribosomal protein eL31 family.

This is Large ribosomal subunit protein eL31 (rpl31e) from Aeropyrum pernix (strain ATCC 700893 / DSM 11879 / JCM 9820 / NBRC 100138 / K1).